A 177-amino-acid polypeptide reads, in one-letter code: Ribosome maturation factor RimM (177 aa).

The PRC barrel domain occupies 100–177; that stretch reads EDEYYWSDLV…TVLVAWPSDY (78 aa).

Belongs to the RimM family. As to quaternary structure, binds ribosomal protein uS19.

The protein localises to the cytoplasm. In terms of biological role, an accessory protein needed during the final step in the assembly of 30S ribosomal subunit, possibly for assembly of the head region. Essential for efficient processing of 16S rRNA. May be needed both before and after RbfA during the maturation of 16S rRNA. It has affinity for free ribosomal 30S subunits but not for 70S ribosomes. This chain is Ribosome maturation factor RimM, found in Psychrobacter cryohalolentis (strain ATCC BAA-1226 / DSM 17306 / VKM B-2378 / K5).